Consider the following 96-residue polypeptide: Co-chaperonin GroES (96 aa).

The protein belongs to the GroES chaperonin family. Heptamer of 7 subunits arranged in a ring. Interacts with the chaperonin GroEL.

It is found in the cytoplasm. Functionally, together with the chaperonin GroEL, plays an essential role in assisting protein folding. The GroEL-GroES system forms a nano-cage that allows encapsulation of the non-native substrate proteins and provides a physical environment optimized to promote and accelerate protein folding. GroES binds to the apical surface of the GroEL ring, thereby capping the opening of the GroEL channel. This Acinetobacter baumannii (strain AB307-0294) protein is Co-chaperonin GroES.